The following is a 386-amino-acid chain: Meiotic chromosome segregation protein C1539.02 (386 aa).

Disordered stretches follow at residues 1–28 (MNQD…SNKS), 46–85 (RALI…SSKQ), and 366–386 (DIHE…KTKG). Over residues 15-28 (AETSQLKNFSSNKS) the composition is skewed to polar residues.

The protein resides in the nucleus. Required for meiotic chromosome segregation. The sequence is that of Meiotic chromosome segregation protein C1539.02 from Schizosaccharomyces pombe (strain 972 / ATCC 24843) (Fission yeast).